A 257-amino-acid polypeptide reads, in one-letter code: Major prion protein (257 aa).

Positions 1–24 (MVKSHIGSWLLVLFVATWSDIGFC) are cleaved as a signal peptide. The tract at residues 25–41 (KKRPKPGGGWNTGGSRY) is interaction with ADGRG6. Residues 25–234 (KKRPKPGGGW…ESEAYYQRGA (210 aa)) are interaction with GRB2, ERI3 and SYN1. The disordered stretch occupies residues 27–114 (RPKPGGGWNT…KPSKPKTNMK (88 aa)). 5 repeat units span residues 54-62 (PQGGGGWGQ), 63-70 (PHGGGWGQ), 71-78 (PHGGGWGQ), 79-86 (PHGGGWGQ), and 87-95 (PHGGGGWGQ). The tract at residues 54-95 (PQGGGGWGQPHGGGWGQPHGGGWGQPHGGGWGQPHGGGGWGQ) is 5 X 8 AA tandem repeats of P-H-G-G-G-W-G-Q. Over residues 55–101 (QGGGGWGQPHGGGWGQPHGGGWGQPHGGGWGQPHGGGGWGQGGGSHG) the composition is skewed to gly residues. Cu(2+) contacts are provided by His64, Gly65, Gly66, His72, Gly73, Gly74, His80, Gly81, Gly82, His88, Gly90, and Gly91. The cysteines at positions 183 and 218 are disulfide-linked. Asn185 and Asn201 each carry an N-linked (GlcNAc...) asparagine glycan. Residue Ala234 is the site of GPI-anchor amidated alanine attachment. The propeptide at 235–257 (SAILFSPPPVILLISLLILLIVG) is removed in mature form.

The protein belongs to the prion family. In terms of assembly, monomer and homodimer. Has a tendency to aggregate into amyloid fibrils containing a cross-beta spine, formed by a steric zipper of superposed beta-strands. Soluble oligomers may represent an intermediate stage on the path to fibril formation. Copper binding may promote oligomerization. Interacts with GRB2, APP, ERI3/PRNPIP and SYN1. Mislocalized cytosolically exposed PrP interacts with MGRN1; this interaction alters MGRN1 subcellular location and causes lysosomal enlargement. Interacts with APP. Interacts with KIAA1191. Interacts with ADGRG6.

The protein resides in the cell membrane. It localises to the golgi apparatus. Functionally, its primary physiological function is unclear. May play a role in neuronal development and synaptic plasticity. May be required for neuronal myelin sheath maintenance. May promote myelin homeostasis through acting as an agonist for ADGRG6 receptor. May play a role in iron uptake and iron homeostasis. Soluble oligomers are toxic to cultured neuroblastoma cells and induce apoptosis (in vitro). Association with GPC1 (via its heparan sulfate chains) targets PRNP to lipid rafts. Also provides Cu(2+) or Zn(2+) for the ascorbate-mediated GPC1 deaminase degradation of its heparan sulfate side chains. In Neovison vison (American mink), this protein is Major prion protein (PRNP).